The following is a 408-amino-acid chain: MEQLFREAQDALAAAGPLCQESQDVLARARQNLEVAVHLGIRTQFLAKAHAHQWTLASKFYSNALTRTKKSLETVTRQQTRFQAARGALEEALGELAATPVQLRVNNGAHNLREFVDEDLISAQVQGKGWNEVHEEALNVFRVLLPEIQRHGDIVNRSKKEFEREKAEQTELLIHQTSDSGIYDLLNSAEACSEDMANLLQSLARHYDLCERGQDLSTGAIEAEDVNELGELRAVLENDAQQLPDVLDELQERLDEVKQGCQGVHNHMTQMYHSYSLEVRQLEGIQAVEKTMDATLEICETQQRDTKEYLLKVQRYVSETSAVVTHYQTFLNSYKALLHEAERRNAAEAKMKDYVTEVNAKLAQMSIQETNRRQDFVAQQGDYLPADIWDELLLPSRRFEARELDGEL.

It belongs to the ATG17 family.

The protein localises to the cytoplasm. The protein resides in the preautophagosomal structure membrane. Autophagy-specific protein that functions in response to autophagy-inducing signals as a scaffold to recruit other ATG proteins to organize pre-autophagosomal structure (PAS) formation. Modulates the timing and magnitude of the autophagy response, such as the size of the sequestering vesicles. Plays particularly a role in pexophagy and nucleophagy. This Yarrowia lipolytica (strain CLIB 122 / E 150) (Yeast) protein is Autophagy-related protein 17 (ATG17).